We begin with the raw amino-acid sequence, 584 residues long: HERV-H_2q24.3 provirus ancestral Env polyprotein (584 aa).

Residues 1 to 35 form the signal peptide; it reads MIFAGKAPSNTSTLMKFYSLLLYSLLFSFPFLCHP. The Extracellular portion of the chain corresponds to 36 to 523; it reads LPLPSYLHHT…WALSNWMSWV (488 aa). N47 carries an N-linked (GlcNAc...) asparagine glycan. Residues 64 to 67 carry the CXXC motif; the sequence is CWLC. 6 N-linked (GlcNAc...) asparagine glycosylation sites follow: N199, N222, N265, N283, N352, and N370. The interval 388–408 is fusion peptide; the sequence is VIPLIPLMVGLGLSASTVALG. A CKS-17 motif is present at residues 454 to 470; it reads LQNRRGLDLLTAEKGGL. A disulfide bridge connects residues C471 and C478. The CX6CC motif lies at 471–479; that stretch reads CIFLNEECC. The N-linked (GlcNAc...) asparagine glycan is linked to N483. Residues 524-544 form a helical membrane-spanning segment; the sequence is LPIVSPLIPIFLLLLFGPCIF. Topologically, residues 545–584 are cytoplasmic; the sequence is RLVSQFIQNRIQAITNHSIRQMFLLTSPQYHPLPQDLPSA.

The protein belongs to the gamma type-C retroviral envelope protein family. HERV class-I H env subfamily. The surface (SU) and transmembrane (TM) proteins form a heterodimer. SU and TM are attached by noncovalent interactions or by a labile interchain disulfide bond. Specific enzymatic cleavages in vivo yield the mature SU and TM proteins. Post-translationally, the CXXC motif is highly conserved across a broad range of retroviral envelope proteins. It is thought to participate in the formation of a labile disulfide bond possibly with the CX6CC motif present in the transmembrane protein. Isomerization of the intersubunit disulfide bond to an SU intrachain disulfide bond is thought to occur upon receptor recognition in order to allow membrane fusion. As to expression, low expression in skin and testis. No expression in several cell lines.

Its subcellular location is the virion. It is found in the cell membrane. Its function is as follows. Retroviral envelope proteins mediate receptor recognition and membrane fusion during early infection. Endogenous envelope proteins may have kept, lost or modified their original function during evolution. This endogenous envelope protein has lost its original fusogenic properties but has immunosuppressive properties in vivo. In terms of biological role, SU mediates receptor recognition. TM anchors the envelope heterodimer to the viral membrane through one transmembrane domain. The other hydrophobic domain, called fusion peptide, mediates fusion of the viral membrane with the target cell membrane. This chain is HERV-H_2q24.3 provirus ancestral Env polyprotein, found in Homo sapiens (Human).